Consider the following 226-residue polypeptide: uncharacterized protein (226 aa).

The N-terminal stretch at 1–18 is a signal peptide; sequence MRRIGLCISLLVTVLVMS.

This is an uncharacterized protein from Bacillus subtilis (strain 168).